We begin with the raw amino-acid sequence, 270 residues long: Triosephosphate isomerase (270 aa).

27 to 29 (NWK) contacts substrate. The active-site Electrophile is H114. E184 functions as the Proton acceptor in the catalytic mechanism. Substrate is bound by residues G190, S230, and 251 to 252 (GG).

This sequence belongs to the triosephosphate isomerase family. Homodimer.

Its subcellular location is the cytoplasm. It carries out the reaction D-glyceraldehyde 3-phosphate = dihydroxyacetone phosphate. The protein operates within carbohydrate biosynthesis; gluconeogenesis. It participates in carbohydrate degradation; glycolysis; D-glyceraldehyde 3-phosphate from glycerone phosphate: step 1/1. In terms of biological role, involved in the gluconeogenesis. Catalyzes stereospecifically the conversion of dihydroxyacetone phosphate (DHAP) to D-glyceraldehyde-3-phosphate (G3P). The protein is Triosephosphate isomerase of Chlamydia muridarum (strain MoPn / Nigg).